Here is a 567-residue protein sequence, read N- to C-terminus: Adenine deaminase 2 (567 aa).

The protein belongs to the metallo-dependent hydrolases superfamily. Adenine deaminase family. The cofactor is Mn(2+).

The enzyme catalyses adenine + H2O + H(+) = hypoxanthine + NH4(+). The sequence is that of Adenine deaminase 2 from Oenococcus oeni (strain ATCC BAA-331 / PSU-1).